Consider the following 298-residue polypeptide: Centromere protein O (298 aa).

The segment at 29-49 (NISNRKSEEPAVRKKESSLRT) is disordered. The segment covering 33–49 (RKSEEPAVRKKESSLRT) has biased composition (basic and acidic residues). The residue at position 35 (S35) is a Phosphoserine. Positions 39 to 74 (AVRKKESSLRTKIRELRQQRDKLRAEVKQWGARVKE) form a coiled coil.

This sequence belongs to the CENP-O/MCM21 family. In terms of assembly, component of the CENPA-CAD complex, composed of CENPI, CENPK, CENPL, CENPO, CENPP, CENPQ, CENPR and CENPS. The CENPA-CAD complex interacts with the CENPA-NAC complex, at least composed of CENPA, CENPC, CENPH, CENPM, CENPN, CENPT and CENPU.

It localises to the nucleus. The protein localises to the chromosome. Its subcellular location is the centromere. The protein resides in the kinetochore. Functionally, component of the CENPA-CAD (nucleosome distal) complex, a complex recruited to centromeres which is involved in assembly of kinetochore proteins, mitotic progression and chromosome segregation. May be involved in incorporation of newly synthesized CENPA into centromeres via its interaction with the CENPA-NAC complex. Modulates the kinetochore-bound levels of NDC80 complex. The protein is Centromere protein O (Cenpo) of Mus musculus (Mouse).